The following is a 371-amino-acid chain: Alanine racemase (371 aa).

Residue lysine 40 is the Proton acceptor; specific for D-alanine of the active site. Lysine 40 bears the N6-(pyridoxal phosphate)lysine mark. Substrate is bound at residue arginine 136. The Proton acceptor; specific for L-alanine role is filled by tyrosine 263. Methionine 310 serves as a coordination point for substrate.

This sequence belongs to the alanine racemase family. Pyridoxal 5'-phosphate serves as cofactor.

The catalysed reaction is L-alanine = D-alanine. The protein operates within amino-acid biosynthesis; D-alanine biosynthesis; D-alanine from L-alanine: step 1/1. In terms of biological role, catalyzes the interconversion of L-alanine and D-alanine. May also act on other amino acids. This chain is Alanine racemase (alr), found in Streptococcus mutans serotype c (strain ATCC 700610 / UA159).